The sequence spans 398 residues: G2/mitotic-specific cyclin-B2 (398 aa).

2 disordered regions span residues 1 to 26 (MALLRRPTVSTDLENNDTGVNSKPKS) and 53 to 76 (AQNTKVPVPPTKTTNVNKHPKPTA). Position 8 is a phosphothreonine (Thr8). Residues 8 to 23 (TVSTDLENNDTGVNSK) are compositionally biased toward polar residues. Positions 55 to 69 (NTKVPVPPTKTTNVN) are enriched in low complexity. Residues Ser77 and Ser92 each carry the phosphoserine modification. Position 94 is a phosphothreonine (Thr94). Phosphoserine occurs at positions 99, 392, and 398.

Belongs to the cyclin family. Cyclin AB subfamily. In terms of assembly, interacts with the CDK1 protein kinase to form a serine/threonine kinase holoenzyme complex also known as maturation promoting factor (MPF). The cyclin subunit imparts substrate specificity to the complex.

Essential for the control of the cell cycle at the G2/M (mitosis) transition. This Bos taurus (Bovine) protein is G2/mitotic-specific cyclin-B2 (CCNB2).